The sequence spans 560 residues: uncharacterized protein (560 aa).

The Cytoplasmic portion of the chain corresponds to 1 to 17 (MEPKRKSGSLAKHDLPQ). Residues 18 to 38 (FYLLIMLYLAQGIPVGLAFGT) form a helical membrane-spanning segment. The Extracellular portion of the chain corresponds to 39–54 (VPFLLKSLAKETSFTS). A helical membrane pass occupies residues 55–75 (LGIFSMATYPYSLKIIWSPIV). At 76–88 (DSLYNKRIGRRRS) the chain is on the cytoplasmic side. The helical transmembrane segment at 89 to 109 (WIIPVQFVSGFVLWALGWCIS) threads the bilayer. The Extracellular segment spans residues 110–139 (QGIIFDGVDDAFHNRGNGTLHSVSIKNLTW). The helical transmembrane segment at 140-160 (WFGLLVFLCATQDIAVDGWAL) threads the bilayer. Residues 161–172 (TILSKESLSYAS) lie on the Cytoplasmic side of the membrane. The chain crosses the membrane as a helical span at residues 173–193 (TAQTIGLNIGYFMSFTIFLSL). Topologically, residues 194–214 (NSSDFANKYFRNIPLDHGFIS) are extracellular. A helical transmembrane segment spans residues 215–235 (LGGYMKFSGMLYIVITIYIIF). At 236-329 (CTKEKPYVEY…KLLEQGFKRE (94 aa)) the chain is on the cytoplasmic side. Residues 330 to 350 (DLAVTVLIDLPFEIIFGYYVV) traverse the membrane as a helical segment. Residues 351 to 374 (KWSSDKDPMIRDNRRLRNSTGTNK) lie on the Extracellular side of the membrane. The chain crosses the membrane as a helical span at residues 375 to 395 (VIKFLVGDAGVLTPWLWGFLG). Over 396–421 (RLAAAVLGSYVVKQFPKDGEISTGYF) the chain is Cytoplasmic. The chain crosses the membrane as a helical span at residues 422 to 442 (CLVIFQHLLGSFMNTVQFIGI). At 443 to 521 (SAFHTRVADP…LNGTVTILRD (79 aa)) the chain is on the extracellular side. The chain crosses the membrane as a helical span at residues 522–542 (GYYITNLICIVVGLFLYFGYL). The Cytoplasmic segment spans residues 543–560 (KRKILHLQSLPISSWRCT).

The protein resides in the membrane. This is an uncharacterized protein from Saccharomyces cerevisiae (strain ATCC 204508 / S288c) (Baker's yeast).